The following is a 101-amino-acid chain: Small ribosomal subunit protein bS16 (101 aa).

Belongs to the bacterial ribosomal protein bS16 family.

In Ureaplasma parvum serovar 3 (strain ATCC 700970), this protein is Small ribosomal subunit protein bS16.